Here is a 726-residue protein sequence, read N- to C-terminus: Delta-1-pyrroline-5-carboxylate synthase B (726 aa).

Residues 1–296 are glutamate 5-kinase; sequence MTEIDRSRAF…WAPVVDTTSR (296 aa). Substrate contacts are provided by S60, D157, and N176. ATP-binding positions include 196-197 and 236-242; these read SD and RGGMTAK. Residues 297 to 717 form a gamma-glutamyl phosphate reductase region; sequence DMAVAARESS…YTHKDLPVLQ (421 aa).

In the N-terminal section; belongs to the glutamate 5-kinase family. It in the C-terminal section; belongs to the gamma-glutamyl phosphate reductase family.

The catalysed reaction is L-glutamate + ATP = L-glutamyl 5-phosphate + ADP. It catalyses the reaction L-glutamate 5-semialdehyde + phosphate + NADP(+) = L-glutamyl 5-phosphate + NADPH + H(+). The protein operates within amino-acid biosynthesis; L-proline biosynthesis; L-glutamate 5-semialdehyde from L-glutamate: step 1/2. Its pathway is amino-acid biosynthesis; L-proline biosynthesis; L-glutamate 5-semialdehyde from L-glutamate: step 2/2. P5CS plays a key role in proline biosynthesis, leading to osmoregulation in plants. This is Delta-1-pyrroline-5-carboxylate synthase B (P5CSB) from Arabidopsis thaliana (Mouse-ear cress).